Here is a 127-residue protein sequence, read N- to C-terminus: Fluoride-specific ion channel FluC (127 aa).

4 consecutive transmembrane segments (helical) span residues 4 to 24 (LLCA…WLGM), 35 to 55 (IGTL…LAWF), 71 to 91 (TGFC…VFLL), and 101 to 121 (LNVM…FWLF). Residues Gly-75 and Thr-78 each contribute to the Na(+) site.

It belongs to the fluoride channel Fluc/FEX (TC 1.A.43) family.

The protein resides in the cell inner membrane. It carries out the reaction fluoride(in) = fluoride(out). Its activity is regulated as follows. Na(+) is not transported, but it plays an essential structural role and its presence is essential for fluoride channel function. Its function is as follows. Fluoride-specific ion channel. Important for reducing fluoride concentration in the cell, thus reducing its toxicity. The polypeptide is Fluoride-specific ion channel FluC (Klebsiella pneumoniae (strain 342)).